The sequence spans 429 residues: Glutamate-1-semialdehyde 2,1-aminomutase 1 (429 aa).

At K268 the chain carries N6-(pyridoxal phosphate)lysine.

The protein belongs to the class-III pyridoxal-phosphate-dependent aminotransferase family. HemL subfamily. As to quaternary structure, homodimer. The cofactor is pyridoxal 5'-phosphate.

Its subcellular location is the cytoplasm. The catalysed reaction is (S)-4-amino-5-oxopentanoate = 5-aminolevulinate. It participates in porphyrin-containing compound metabolism; protoporphyrin-IX biosynthesis; 5-aminolevulinate from L-glutamyl-tRNA(Glu): step 2/2. This Staphylococcus haemolyticus (strain JCSC1435) protein is Glutamate-1-semialdehyde 2,1-aminomutase 1.